Consider the following 179-residue polypeptide: MSRIGKRPIPVPAGVTVAIDGSAVTVKGPKGELSRVLPADIVVSQEGAELLVKRPSDEERHKALHGLTRTLVANMVEGVTTGFKRVLEITGVGYKAEIKPYGALLSLGFSHQIEYKAPQGVQITAPNPTTVVIEGASKEHVGQVAAEIRSLRKPEPYKGKGVKYQGEVVRRKAGKAGGK.

This sequence belongs to the universal ribosomal protein uL6 family. Part of the 50S ribosomal subunit.

Functionally, this protein binds to the 23S rRNA, and is important in its secondary structure. It is located near the subunit interface in the base of the L7/L12 stalk, and near the tRNA binding site of the peptidyltransferase center. The protein is Large ribosomal subunit protein uL6 of Gemmatimonas aurantiaca (strain DSM 14586 / JCM 11422 / NBRC 100505 / T-27).